The sequence spans 377 residues: Guanine nucleotide-binding protein subunit beta (377 aa).

7 WD repeats span residues 63-93 (GHTG…IVWN), 105-135 (LPCA…SIFN), 154-185 (GHKG…VLWD), 202-233 (GHTA…RLWD), 246-276 (GHES…RLFD), 293-323 (GDIP…YVWD), and 339-369 (SHEG…KIWA).

It belongs to the WD repeat G protein beta family. G proteins are composed of 3 units, alpha, beta and gamma.

Functionally, guanine nucleotide-binding proteins (G proteins) are involved as a modulator or transducer in various transmembrane signaling systems. The beta and gamma chains are required for the GTPase activity, for replacement of GDP by GTP, and for G protein-effector interaction. The sequence is that of Guanine nucleotide-binding protein subunit beta (GB1) from Solanum tuberosum (Potato).